The primary structure comprises 94 residues: uncharacterized protein (94 aa).

The segment covering 33 to 42 has biased composition (polar residues); that stretch reads INSLPTFTKP. The interval 33–57 is disordered; the sequence is INSLPTFTKPNDSNNNVNKSSNDGV. Residues 43 to 57 are compositionally biased toward low complexity; it reads NDSNNNVNKSSNDGV.

This is an uncharacterized protein from Dictyostelium discoideum (Social amoeba).